The chain runs to 455 residues: Tyramine receptor Ser-2 (455 aa).

At 1 to 60 (MFRNYTDSVQEMVLRAIDSIRDSVINASSAVSTTTLPPLDIPMTSMKPPSIIPTVELVLG) the chain is on the extracellular side. N-linked (GlcNAc...) asparagine glycosylation is found at Asn4 and Asn26. A helical membrane pass occupies residues 61–83 (TITYLVIIAMTVVGNTLVVVAVF). The Cytoplasmic segment spans residues 84–93 (SYRPLKKVQN). The helical transmembrane segment at 94–115 (YFLVSLAASDLAVAIFVMPLHV) threads the bilayer. Over 116 to 133 (VTFLAGGKWLLGVTVCQF) the chain is Extracellular. Cysteines 131 and 209 form a disulfide. Residues 134–154 (FTTADILLCTSSILNLCAIAL) traverse the membrane as a helical segment. The Cytoplasmic segment spans residues 155–174 (DRYWAIHNPINYAQKRTTKF). The chain crosses the membrane as a helical span at residues 175 to 197 (VCIVIVIVWILSMLISVPPIIGW). Residues 198–221 (NNWQENMMEDSCGLSTEKAFVVFS) lie on the Extracellular side of the membrane. The helical transmembrane segment at 222–243 (AAGSFFLPLLVMVVVYVKIFIS) threads the bilayer. The Cytoplasmic portion of the chain corresponds to 244 to 370 (ARQRIRTNRG…VAKEKRAAKT (127 aa)). The helical transmembrane segment at 371–392 (IAVIIFVFSFCWLPFFVAYVIR) threads the bilayer. Topologically, residues 393 to 407 (PFCETCKLHAKVEQA) are extracellular. A helical membrane pass occupies residues 408 to 428 (FTWLGYINSSLNPFLYGILNL). Over 429 to 455 (EFRRAFKKILCPKAVLEQRRRRMSAQP) the chain is Cytoplasmic.

Belongs to the G-protein coupled receptor 1 family. The different isoforms are expressed in specific, but overlapping sets of sensory, inter- and motor neurons, including AIY, AIZ and RIA interneurons. They are also expressed in pharyngeal cells, head muscles and excretory gland cells.

The protein localises to the cell membrane. Functionally, G-protein coupled receptor for tyramine, a known neurotransmitter and neuromodulator and direct precursor of octopamine. The rank order of potency is tyramine &gt; octopamine &gt; dopamine &gt; serotonin &gt; epinephrine = norepinephrine. This Caenorhabditis elegans protein is Tyramine receptor Ser-2 (ser-2).